The primary structure comprises 421 residues: Protein FAM110C (421 aa).

3 disordered regions span residues Met-1 to Ala-36, Thr-51 to Leu-80, and Thr-141 to Met-266. Basic and acidic residues-rich tracts occupy residues Arg-143–Glu-155, Pro-185–Glu-202, and Pro-232–Glu-249. Ser-350 carries the phosphoserine modification.

This sequence belongs to the FAM110 family. As to quaternary structure, interacts with AKT1; the interaction is transient and follows AKT1 activation. Interacts with PPP2CA and alpha-tubulin.

The protein resides in the cytoplasm. It is found in the cytoskeleton. It localises to the microtubule organizing center. Its subcellular location is the centrosome. The protein localises to the spindle pole. The protein resides in the nucleus. Its function is as follows. May play a role in microtubule organization. May play a role in cell spreading and cell migration of epithelial cells; the function may involve the AKT1 signaling pathway. The polypeptide is Protein FAM110C (Fam110c) (Mus musculus (Mouse)).